A 50-amino-acid polypeptide reads, in one-letter code: Sperm protamine P1 (50 aa).

The protein belongs to the protamine P1 family. Testis.

It is found in the nucleus. It localises to the chromosome. Functionally, protamines substitute for histones in the chromatin of sperm during the haploid phase of spermatogenesis. They compact sperm DNA into a highly condensed, stable and inactive complex. This chain is Sperm protamine P1 (PRM1), found in Chilonatalus micropus (Cuban funnel-eared bat).